The chain runs to 232 residues: MSGNSQLPPDVIGFICSKYDIILASTSPRRYEILHDIMGITDLKTMVSTFEENLDKMNYSTDPIGYVCDTSWHKAQNIIEILTDYEDENPNEIDKPKLIICADTIIIDKSGRIYEKPKTKEVQKKFLMKFCYEDDEPVNVVTAVTLIKWYGRENFELVPFRDETKVYFDNKIPLRILEEYVESGDGLEVGGGFKIQGQGAILIEKIEGDYYNVVGLPLNKTFKGLYAEANSI.

The active-site Proton acceptor is the Asp103.

Belongs to the Maf family. YhdE subfamily. The cofactor is a divalent metal cation.

The protein localises to the cytoplasm. The enzyme catalyses dTTP + H2O = dTMP + diphosphate + H(+). It carries out the reaction UTP + H2O = UMP + diphosphate + H(+). It catalyses the reaction 5-methyl-UTP + H2O = 5-methyl-UMP + diphosphate + H(+). The catalysed reaction is psi-UTP + H2O = psi-UMP + diphosphate + H(+). Its function is as follows. Nucleoside triphosphate pyrophosphatase that hydrolyzes dTTP and UTP. Can also hydrolyze the modified nucleotides 5-methyl-UTP (m(5)UTP) and pseudo-UTP. Has weak activity with CTP. May have a dual role in cell division arrest and in preventing the incorporation of modified nucleotides into cellular nucleic acids. This Saccharomyces cerevisiae (strain ATCC 204508 / S288c) (Baker's yeast) protein is dTTP/UTP pyrophosphatase.